The chain runs to 271 residues: Zinc finger CCHC domain-containing protein 9 (271 aa).

Positions 1–40 (MTRWARVSTTYNKRPLPATSWEDMKKGSFEGTSQNLPKRK) are disordered. The residue at position 48 (S48) is a Phosphoserine. 4 CCHC-type zinc fingers span residues 128–145 (MVCF…DCPA), 155–172 (GICY…KCKA), 184–201 (AKCF…SCPD), and 211–228 (GGCK…DCPE).

Its subcellular location is the nucleus. The protein localises to the nucleolus. Functionally, may down-regulate transcription mediated by NF-kappa-B and the serum response element. The protein is Zinc finger CCHC domain-containing protein 9 (ZCCHC9) of Homo sapiens (Human).